A 213-amino-acid chain; its full sequence is Transmembrane emp24 domain-containing protein p24delta8 (213 aa).

The signal sequence occupies residues methionine 1 to serine 22. Over methionine 23–lysine 180 the chain is Lumenal. The GOLD domain occupies threonine 32–threonine 148. Asparagine 97 is a glycosylation site (N-linked (GlcNAc...) asparagine). The stretch at leucine 163–serine 176 forms a coiled coil. Arginine 166 is subject to Omega-N-methylated arginine. Asparagine 174 is a glycosylation site (N-linked (GlcNAc...) asparagine). The chain crosses the membrane as a helical span at residues methionine 181–leucine 203. Residues histidine 202–isoleucine 213 are interaction with ARF1. The Cytoplasmic segment spans residues lysine 204–isoleucine 213. The COPII vesicle coat-binding motif lies at phenylalanine 206 to phenylalanine 207. A COPI vesicle coat-binding motif is present at residues phenylalanine 206–isoleucine 213.

This sequence belongs to the EMP24/GP25L family. Probably oligomerizes with other members of the EMP24/GP25L family. Associates with the COPI vesicle coat (coatomer). Associates with the COPII vesicle coat (coatomer). Interacts with ARF1 (GDP-bound).

Its subcellular location is the endoplasmic reticulum membrane. It localises to the golgi apparatus. It is found in the cis-Golgi network membrane. The protein localises to the golgi stack membrane. Functionally, involved in vesicular protein trafficking. Mainly functions in the early secretory pathway. Thought to act as cargo receptor at the lumenal side for incorporation of secretory cargo molecules into transport vesicles and to be involved in vesicle coat formation at the cytoplasmic side. On Golgi membranes, acts as a primary receptor for ARF1-GDP which is involved in COPI-vesicle formation. The chain is Transmembrane emp24 domain-containing protein p24delta8 from Arabidopsis thaliana (Mouse-ear cress).